We begin with the raw amino-acid sequence, 390 residues long: Galactokinase (390 aa).

Substrate is bound at residue 33 to 36; that stretch reads EHTD. Residues serine 67 and 124 to 130 contribute to the ATP site; that span reads GAGLSSS. Mg(2+) contacts are provided by serine 130 and glutamate 162. The active-site Proton acceptor is the aspartate 174. Position 224 (tyrosine 224) interacts with substrate.

It belongs to the GHMP kinase family. GalK subfamily.

It localises to the cytoplasm. The enzyme catalyses alpha-D-galactose + ATP = alpha-D-galactose 1-phosphate + ADP + H(+). Its pathway is carbohydrate metabolism; galactose metabolism. In terms of biological role, catalyzes the transfer of the gamma-phosphate of ATP to D-galactose to form alpha-D-galactose-1-phosphate (Gal-1-P). In Bacillus subtilis (strain 168), this protein is Galactokinase.